The sequence spans 194 residues: Large ribosomal subunit protein eL15 (194 aa).

The interval Gly161–Lys194 is disordered.

Belongs to the eukaryotic ribosomal protein eL15 family.

The sequence is that of Large ribosomal subunit protein eL15 from Methanococcus maripaludis (strain C5 / ATCC BAA-1333).